The following is a 1400-amino-acid chain: DNA topoisomerase 2 (1400 aa).

A compositionally biased stretch (low complexity) spans 1-30 (MSSFESDSASDAESAFSDASSDFTPSSSVK). The interval 1–57 (MSSFESDSASDAESAFSDASSDFTPSSSVKSKGKVPLRDSTNTTAQPSAPATGDASD) is disordered. The span at 39-57 (DSTNTTAQPSAPATGDASD) shows a compositional bias: polar residues. Residues Asn-117, Asn-146, 174-176 (SSN), and 187-194 (GRNGYGAK) each bind ATP. Positions 379–386 (TKKEKGKK) are interaction with DNA. An ATP-binding site is contributed by 415-417 (QTK). The Toprim domain occupies 497-613 (CTLILTEGDS…GLLEIPGFLL (117 aa)). The Mg(2+) site is built by Glu-503, Asp-582, and Asp-584. Residues 749–1214 (IPSILDGFKP…SAKDLWNSDL (466 aa)) form the Topo IIA-type catalytic domain. Residue Tyr-839 is the O-(5'-phospho-DNA)-tyrosine intermediate of the active site. Residues 1019–1028 (KLISSISLSN) are interaction with DNA. A disordered region spans residues 1235–1400 (FGPTAKTSTR…NESDEDYMSE (166 aa)). Low complexity predominate over residues 1262 to 1271 (SSTPKASTPT). Residues 1312–1321 (PKRKTPKSKP) show a composition bias toward basic residues. Residues 1389-1400 (DGNESDEDYMSE) are compositionally biased toward acidic residues.

The protein belongs to the type II topoisomerase family. As to quaternary structure, homodimer. It depends on Mg(2+) as a cofactor. Mn(2+) serves as cofactor. Ca(2+) is required as a cofactor.

The protein resides in the nucleus. The enzyme catalyses ATP-dependent breakage, passage and rejoining of double-stranded DNA.. In terms of biological role, control of topological states of DNA by transient breakage and subsequent rejoining of DNA strands. Topoisomerase II makes double-strand breaks. The polypeptide is DNA topoisomerase 2 (TOP2) (Meyerozyma guilliermondii (strain ATCC 6260 / CBS 566 / DSM 6381 / JCM 1539 / NBRC 10279 / NRRL Y-324) (Yeast)).